The sequence spans 364 residues: Ferrochelatase (364 aa).

Fe cation contacts are provided by His-210 and Glu-291.

This sequence belongs to the ferrochelatase family.

The protein resides in the cytoplasm. It catalyses the reaction heme b + 2 H(+) = protoporphyrin IX + Fe(2+). It functions in the pathway porphyrin-containing compound metabolism; protoheme biosynthesis; protoheme from protoporphyrin-IX: step 1/1. Catalyzes the ferrous insertion into protoporphyrin IX. This chain is Ferrochelatase, found in Idiomarina loihiensis (strain ATCC BAA-735 / DSM 15497 / L2-TR).